The following is a 148-amino-acid chain: Large ribosomal subunit protein uL15 (148 aa).

A compositionally biased stretch (basic residues) spans 1-30 (MPSRLRKTRKLRGHVSHGHGRIGKHRKHPG). The tract at residues 1 to 37 (MPSRLRKTRKLRGHVSHGHGRIGKHRKHPGGRGNAGG) is disordered. A (3S)-3-hydroxyhistidine modification is found at H39. N6-acetyllysine occurs at positions 47 and 55. Phosphoserine is present on S68. N6-acetyllysine is present on K110.

It belongs to the universal ribosomal protein uL15 family. As to quaternary structure, component of the large ribosomal subunit. Post-translationally, hydroxylated on His-39 by MINA.

The protein localises to the cytoplasm. Its function is as follows. Component of the large ribosomal subunit. The ribosome is a large ribonucleoprotein complex responsible for the synthesis of proteins in the cell. The sequence is that of Large ribosomal subunit protein uL15 (Rpl27a) from Rattus norvegicus (Rat).